The chain runs to 423 residues: Maltoporin 1 (423 aa).

A signal peptide spans 1–24 (MITLRKLPIALAVAAGVLSTQAMA).

This sequence belongs to the porin LamB (TC 1.B.3) family. Homotrimer formed of three 18-stranded antiparallel beta-barrels, containing three independent channels.

The protein localises to the cell outer membrane. It catalyses the reaction beta-maltose(in) = beta-maltose(out). In terms of biological role, involved in the transport of maltose and maltodextrins. The polypeptide is Maltoporin 1 (Yersinia pestis bv. Antiqua (strain Antiqua)).